The following is a 458-amino-acid chain: Bifunctional protein GlmU (458 aa).

The tract at residues 1–228 is pyrophosphorylase; that stretch reads MHPKLDILIL…DWEVLGVNSK (228 aa). Residues 10 to 13, Lys24, Gln75, 80 to 81, 102 to 104, Gly139, Glu153, Asn168, and Asn226 each bind UDP-N-acetyl-alpha-D-glucosamine; these read LAAG, GT, and YGD. Asp104 contributes to the Mg(2+) binding site. Asn226 provides a ligand contact to Mg(2+). The segment at 229–249 is linker; the sequence is AQLAELERIHQNEVAQRLLAD. The N-acetyltransferase stretch occupies residues 250–458; the sequence is GVTLMDPARL…KRPIKPKKEG (209 aa). UDP-N-acetyl-alpha-D-glucosamine-binding residues include Arg332 and Lys350. His362 acts as the Proton acceptor in catalysis. Tyr365 and Asn376 together coordinate UDP-N-acetyl-alpha-D-glucosamine. Residues Ala379, 385–386, Ser404, Ala422, and Arg439 contribute to the acetyl-CoA site; that span reads NY.

This sequence in the N-terminal section; belongs to the N-acetylglucosamine-1-phosphate uridyltransferase family. The protein in the C-terminal section; belongs to the transferase hexapeptide repeat family. Homotrimer. Requires Mg(2+) as cofactor.

The protein localises to the cytoplasm. The enzyme catalyses alpha-D-glucosamine 1-phosphate + acetyl-CoA = N-acetyl-alpha-D-glucosamine 1-phosphate + CoA + H(+). It catalyses the reaction N-acetyl-alpha-D-glucosamine 1-phosphate + UTP + H(+) = UDP-N-acetyl-alpha-D-glucosamine + diphosphate. It participates in nucleotide-sugar biosynthesis; UDP-N-acetyl-alpha-D-glucosamine biosynthesis; N-acetyl-alpha-D-glucosamine 1-phosphate from alpha-D-glucosamine 6-phosphate (route II): step 2/2. Its pathway is nucleotide-sugar biosynthesis; UDP-N-acetyl-alpha-D-glucosamine biosynthesis; UDP-N-acetyl-alpha-D-glucosamine from N-acetyl-alpha-D-glucosamine 1-phosphate: step 1/1. It functions in the pathway bacterial outer membrane biogenesis; LPS lipid A biosynthesis. In terms of biological role, catalyzes the last two sequential reactions in the de novo biosynthetic pathway for UDP-N-acetylglucosamine (UDP-GlcNAc). The C-terminal domain catalyzes the transfer of acetyl group from acetyl coenzyme A to glucosamine-1-phosphate (GlcN-1-P) to produce N-acetylglucosamine-1-phosphate (GlcNAc-1-P), which is converted into UDP-GlcNAc by the transfer of uridine 5-monophosphate (from uridine 5-triphosphate), a reaction catalyzed by the N-terminal domain. The chain is Bifunctional protein GlmU from Thiobacillus denitrificans (strain ATCC 25259 / T1).